The primary structure comprises 138 residues: Acidic phospholipase A2 Cvv-E6a (138 aa).

An N-terminal signal peptide occupies residues 1-16 (MRTLWIVAVLLLGVEG). Disulfide bonds link Cys42/Cys131, Cys44/Cys60, Cys59/Cys111, Cys65/Cys138, Cys66/Cys104, Cys73/Cys97, and Cys91/Cys102. Tyr43, Gly45, and Gly47 together coordinate Ca(2+). The active site involves His63. Asp64 contributes to the Ca(2+) binding site. Asp105 is a catalytic residue.

It belongs to the phospholipase A2 family. Group II subfamily. D49 sub-subfamily. Requires Ca(2+) as cofactor. As to expression, expressed by the venom gland.

The protein localises to the secreted. The enzyme catalyses a 1,2-diacyl-sn-glycero-3-phosphocholine + H2O = a 1-acyl-sn-glycero-3-phosphocholine + a fatty acid + H(+). Functionally, snake venom phospholipase A2 (PLA2) that significantly inhibits ADP-induced platelet aggregation in platelet-rich plasma of human, rabbit and guinea pig. PLA2 catalyzes the calcium-dependent hydrolysis of the 2-acyl groups in 3-sn-phosphoglycerides. The sequence is that of Acidic phospholipase A2 Cvv-E6a from Crotalus viridis viridis (Prairie rattlesnake).